Reading from the N-terminus, the 760-residue chain is Transglutaminase-activating metalloprotease (760 aa).

A signal peptide spans 1-33 (MRPTPQRRAVATGALVAVTAMLAVGVQTTSANA). 2 disordered regions span residues 32 to 59 (NAGQDKAAHPAPRQSIHKPDPGAEPVKL) and 228 to 265 (KQGTGNSQHSGQVQIGTTKSGSSYQMNDTTRGGHKTYN). A propeptide spanning residues 34-229 (GQDKAAHPAP…KLFEFQGVKQ (196 aa)) is cleaved from the precursor. Over residues 228-257 (KQGTGNSQHSGQVQIGTTKSGSSYQMNDTT) the composition is skewed to polar residues. Zn(2+) is bound at residue His366. The active site involves Glu367. His370 and Glu390 together coordinate Zn(2+). Residue His454 is the Proton donor of the active site. The region spanning 640 to 760 (TVNTTGGGSV…GTIDKWRLTF (121 aa)) is the P/Homo B domain.

This sequence belongs to the peptidase M4 family. Zn(2+) is required as a cofactor.

It localises to the secreted. Cleaves the N-terminal propeptide of transglutaminase thus activating it. The sequence is that of Transglutaminase-activating metalloprotease from Streptomyces mobaraensis (Streptoverticillium mobaraense).